Consider the following 818-residue polypeptide: MSWMRKALLSVFHYPVKLLVKAHSIPVNVETELGIDKSKPIVYLLPTNSVTDQLSLRMSTQALDLPSPTKTLTLAGREYSSTLFLRKTQPLFRSSAKDTGIEEVFTDLFHLHRDHENLDLQVVPVYVTWGRAPGRGNPGLSDLIADKAAPSWLRKLFIVLFLGRDNFINYSKAVSARAMSNQHGSDQSIAHKLVRVASTHFQRKRQSMTGPTLLERQELNNSVLGSDAVRRAIAEESRSKKVSHDKAKACAQSYITEIAADYREGLIRFGDRLLTRIWNKIYNGISVGHAERIRELAANGHEIIYVPCHRSHMDYLLLTYVIYHEGMVTPHIAAGINLNFWPVGKMFRRGGAFFLRRSFAGNKLYTAVFREYLELLFNKGYSVKYYPEGGRSRTGRLIPPKTGMLAITIQAMLKGVNRPVSIVPVYIGYENVMEVKSYLNELKGSKKKKESNLQVFSAIRKLKNYGHGYVNFGEPIALNQFLESHVPNWRDCKDAEPEKKPAWLTPAVNELANNVMTRINRAAALNGMALTSLCLLSSKTQTMSEAELKQSIGDFMDLFKAVPFSDDATIPDSTAEALLRDTLKLGRFDIKEDDYGRLISPQPKSAVYLTYYRNNILHLFAIPGLVMASVFAKKGTTKNDILQLIAALYPLLQKELFLHLTQDEALAHTDALVTALLNNGLLRQKDKELLPPDAHCKQFHSAWLLSRCMQETLQRYAVVLTILDKEKVISRGALERESKQVAERLSALYGLSSPEFYDKNVLSSFIGALKENHWLDSEKDGSLKYSEECEALRQDVMALIWPEMMQHLENVALNGQTN.

Positions 308-313 (CHRSHM) match the HXXXXD motif motif.

This sequence belongs to the GPAT/DAPAT family.

Its subcellular location is the cell inner membrane. It carries out the reaction sn-glycerol 3-phosphate + an acyl-CoA = a 1-acyl-sn-glycero-3-phosphate + CoA. It functions in the pathway phospholipid metabolism; CDP-diacylglycerol biosynthesis; CDP-diacylglycerol from sn-glycerol 3-phosphate: step 1/3. The protein is Glycerol-3-phosphate acyltransferase of Alteromonas mediterranea (strain DSM 17117 / CIP 110805 / LMG 28347 / Deep ecotype).